A 567-amino-acid polypeptide reads, in one-letter code: Zinc finger protein 512 (567 aa).

Residues 1–32 (MSSRLGAVPATSGPTTFKQQRSTRIVGAKNSR) form a disordered region. Positions 12 to 23 (SGPTTFKQQRST) are enriched in polar residues. Residues K18 and K84 each participate in a glycyl lysine isopeptide (Lys-Gly) (interchain with G-Cter in SUMO2) cross-link. The interval 86-148 (AATSHVEGSG…QARRIRKEPP (63 aa)) is disordered. Basic residues predominate over residues 119 to 130 (KKHKLYGRKQRP). A C2H2-type 1 zinc finger spans residues 197–220 (FTCHHCGKQLRSLAGMKYHVMANH). A Glycyl lysine isopeptide (Lys-Gly) (interchain with G-Cter in SUMO2) cross-link involves residue K227. A C2H2-type 2 zinc finger spans residues 287-310 (LKCHHCGKPYRSKAGLAYHLRSEH). K333 is covalently cross-linked (Glycyl lysine isopeptide (Lys-Gly) (interchain with G-Cter in SUMO2)). The segment at 406–430 (IQCPNQGCEAVYSSVSGLKAHLGSC) adopts a C2H2-type 3; atypical zinc-finger fold. The segment at 440–463 (YKCLLCQKEFVSESGVKYHINSVH) adopts a C2H2-type 4 zinc-finger fold. The disordered stretch occupies residues 486–567 (QRQQEEEKRR…PKTNHKRGRK (82 aa)). Over residues 495–508 (RQQHRSRRSLRRRQ) the composition is skewed to basic residues. The segment covering 523 to 532 (VGKDQRRNNE) has biased composition (basic and acidic residues). The segment covering 556-567 (KPPKTNHKRGRK) has biased composition (basic residues).

The protein belongs to the krueppel C2H2-type zinc-finger protein family.

The protein localises to the nucleus. May be involved in transcriptional regulation. The sequence is that of Zinc finger protein 512 (ZNF512) from Homo sapiens (Human).